A 295-amino-acid polypeptide reads, in one-letter code: GATA zinc finger domain-containing protein 23 (295 aa).

Residues 115–126 show a composition bias toward low complexity; it reads ASTSKTATSKNV. A disordered region spans residues 115–240; sequence ASTSKTATSK…KRGRPSKIQP (126 aa). Residues 127–145 show a composition bias toward polar residues; the sequence is ISNIENNTNKSQPLESNDL. The segment covering 146–163 has biased composition (low complexity); the sequence is TPPSSKSSNSSPSTSPSK. Basic residues predominate over residues 164 to 174; sequence RVSKSKTRVTK. Over residues 181–227 the composition is skewed to low complexity; that stretch reads STSSSGETENLTTTSTADTTATTDTADTTDGTNTRTSNTSSDDTTTE. Positions 229-241 form a DNA-binding region, a.T hook; sequence TKKRGRPSKIQPD. The segment at 243–270 adopts a GATA-type zinc-finger fold; it reads CYVCRRTFTSYWRKGIFNDQNEDLCNPC.

This is GATA zinc finger domain-containing protein 23 (gtaW) from Dictyostelium discoideum (Social amoeba).